Consider the following 402-residue polypeptide: Digeranylgeranylglycerophospholipid reductase (402 aa).

The FAD site is built by glycine 15, glutamate 34, cysteine 45, alanine 46, glycine 48, arginine 99, alanine 123, aspartate 280, glycine 292, and isoleucine 293.

The protein belongs to the geranylgeranyl reductase family. DGGGPL reductase subfamily. The cofactor is FAD.

The enzyme catalyses a 2,3-bis-O-phytanyl-sn-glycerol 1-phospholipid + 8 oxidized 2[4Fe-4S]-[ferredoxin] = a 2,3-bis-O-(geranylgeranyl)-sn-glycerol 1-phospholipid + 8 reduced 2[4Fe-4S]-[ferredoxin] + 16 H(+). The catalysed reaction is 2,3-bis-O-(phytanyl)-sn-glycerol 1-phosphate + 8 oxidized 2[4Fe-4S]-[ferredoxin] = 2,3-bis-O-(geranylgeranyl)-sn-glycerol 1-phosphate + 8 reduced 2[4Fe-4S]-[ferredoxin] + 16 H(+). It catalyses the reaction a 2,3-bis-O-phytanyl-sn-glycerol 1-phospholipid + 8 A = a 2,3-bis-O-(geranylgeranyl)-sn-glycerol 1-phospholipid + 8 AH2. It carries out the reaction CDP-2,3-bis-O-(geranylgeranyl)-sn-glycerol + 8 AH2 = CDP-2,3-bis-O-(phytanyl)-sn-glycerol + 8 A. The enzyme catalyses archaetidylserine + 8 AH2 = 2,3-bis-O-phytanyl-sn-glycero-3-phospho-L-serine + 8 A. It participates in membrane lipid metabolism; glycerophospholipid metabolism. Functionally, is involved in the reduction of 2,3-digeranylgeranylglycerophospholipids (unsaturated archaeols) into 2,3-diphytanylglycerophospholipids (saturated archaeols) in the biosynthesis of archaeal membrane lipids. Catalyzes the formation of archaetidic acid (2,3-di-O-phytanyl-sn-glyceryl phosphate) from 2,3-di-O-geranylgeranylglyceryl phosphate (DGGGP) via the hydrogenation of each double bond of the isoprenoid chains. Is also probably able to reduce double bonds of geranyl groups in CDP-2,3-bis-O-(geranylgeranyl)-sn-glycerol and archaetidylserine, thus acting at various stages in the biosynthesis of archaeal membrane lipids. The sequence is that of Digeranylgeranylglycerophospholipid reductase from Methanospirillum hungatei JF-1 (strain ATCC 27890 / DSM 864 / NBRC 100397 / JF-1).